The following is a 360-amino-acid chain: Photosystem II protein D1 (360 aa).

3 consecutive transmembrane segments (helical) span residues 30–47, 119–134, and 143–157; these read YVGWFGVLMIPCLLAAAI, HFLIGICGWMGRQWEL, and WICVAYSAPVSAAFA. Chlorophyll a is bound at residue His119. Trp127 is a pheophytin a binding site. Positions 171 and 190 each coordinate [CaMn4O5] cluster. A helical transmembrane segment spans residues 198 to 219; the sequence is FHMAGVAGMFGGSLFSAMHGSL. Chlorophyll a is bound at residue His199. A quinone-binding positions include His216 and 265–266; that span reads SF. Fe cation is bound at residue His216. His273 contacts Fe cation. A helical transmembrane segment spans residues 275–289; that stretch reads FLAIFPVVCVWLTSM. Residues His333, Glu334, Asp343, and Ala345 each coordinate [CaMn4O5] cluster. A propeptide spanning residues 346 to 360 is cleaved from the precursor; sequence AAESTSVALVAPSIG.

The protein belongs to the reaction center PufL/M/PsbA/D family. In terms of assembly, PSII is composed of 1 copy each of membrane proteins PsbA, PsbB, PsbC, PsbD, PsbE, PsbF, PsbH, PsbI, PsbJ, PsbK, PsbL, PsbM, PsbT, PsbX, PsbY, Psb30/Ycf12, peripheral proteins PsbO, CyanoQ (PsbQ), PsbU, PsbV and a large number of cofactors. It forms dimeric complexes. It depends on The D1/D2 heterodimer binds P680, chlorophylls that are the primary electron donor of PSII, and subsequent electron acceptors. It shares a non-heme iron and each subunit binds pheophytin, quinone, additional chlorophylls, carotenoids and lipids. D1 provides most of the ligands for the Mn4-Ca-O5 cluster of the oxygen-evolving complex (OEC). There is also a Cl(-1) ion associated with D1 and D2, which is required for oxygen evolution. The PSII complex binds additional chlorophylls, carotenoids and specific lipids. as a cofactor. Tyr-162 forms a radical intermediate that is referred to as redox-active TyrZ, YZ or Y-Z. In terms of processing, C-terminally processed by CtpA; processing is essential to allow assembly of the oxygen-evolving complex and thus photosynthetic growth.

Its subcellular location is the cellular thylakoid membrane. The enzyme catalyses 2 a plastoquinone + 4 hnu + 2 H2O = 2 a plastoquinol + O2. Functionally, photosystem II (PSII) is a light-driven water:plastoquinone oxidoreductase that uses light energy to abstract electrons from H(2)O, generating O(2) and a proton gradient subsequently used for ATP formation. It consists of a core antenna complex that captures photons, and an electron transfer chain that converts photonic excitation into a charge separation. The D1/D2 (PsbA/PsbD) reaction center heterodimer binds P680, the primary electron donor of PSII as well as several subsequent electron acceptors. The sequence is that of Photosystem II protein D1 from Prochlorococcus marinus (strain SARG / CCMP1375 / SS120).